Reading from the N-terminus, the 394-residue chain is NAD(P)H-quinone oxidoreductase subunit H (394 aa).

The protein belongs to the complex I 49 kDa subunit family. In terms of assembly, NDH-1 can be composed of about 15 different subunits; different subcomplexes with different compositions have been identified which probably have different functions.

The protein resides in the cellular thylakoid membrane. It catalyses the reaction a plastoquinone + NADH + (n+1) H(+)(in) = a plastoquinol + NAD(+) + n H(+)(out). The enzyme catalyses a plastoquinone + NADPH + (n+1) H(+)(in) = a plastoquinol + NADP(+) + n H(+)(out). NDH-1 shuttles electrons from an unknown electron donor, via FMN and iron-sulfur (Fe-S) centers, to quinones in the respiratory and/or the photosynthetic chain. The immediate electron acceptor for the enzyme in this species is believed to be plastoquinone. Couples the redox reaction to proton translocation, and thus conserves the redox energy in a proton gradient. Cyanobacterial NDH-1 also plays a role in inorganic carbon-concentration. The chain is NAD(P)H-quinone oxidoreductase subunit H from Synechococcus sp. (strain CC9311).